A 286-amino-acid polypeptide reads, in one-letter code: Elongation factor Ts (286 aa).

The involved in Mg(2+) ion dislocation from EF-Tu stretch occupies residues 82–85 (TDFV).

The protein belongs to the EF-Ts family.

The protein resides in the cytoplasm. In terms of biological role, associates with the EF-Tu.GDP complex and induces the exchange of GDP to GTP. It remains bound to the aminoacyl-tRNA.EF-Tu.GTP complex up to the GTP hydrolysis stage on the ribosome. The chain is Elongation factor Ts from Hahella chejuensis (strain KCTC 2396).